A 152-amino-acid polypeptide reads, in one-letter code: UPF0266 membrane protein YobD (152 aa).

The next 3 helical transmembrane spans lie at 6–26 (LVLI…QFIM), 45–65 (VDSV…VTSH), and 67–87 (AQMT…IFWI).

The protein belongs to the UPF0266 family.

The protein resides in the cell inner membrane. The sequence is that of UPF0266 membrane protein YobD from Salmonella dublin (strain CT_02021853).